A 394-amino-acid polypeptide reads, in one-letter code: MAKERFDRSKPHVNIGTIGHIDHGKTTLTAAICTVLSKAGTSEAKKYDEIDAAPEEKARGITINTAHVEYATQNRHYAHVDCPGHADYVKNMITGAAQMDGGILVVSATDGPMPQTREHILLARQVGVPKMVVFLNKCDVADDPEMQELVEMEVRDLLKSYGFDGDNTPVIRGSALGALNGEPAWEEKIHELMKAVDEYIPTPDREVDKPFLLPIEDTMTITGRGTVVTGRVERGQLKVGEEVEIVGITDTRKVVVTGIEMFRKELDAAMAGDNAGILLRGVDRKDVQRGQVLAKPGSITPHKKFRAEIYALKKDEGGRHTAFLNGYRPQFYFRTTDVTGSIQLKEGTEMVMPGDNTEIIVELISSIACEKGSKFSIREGGRTVGAGTVVEVLE.

The region spanning 10–204 (KPHVNIGTIG…AVDEYIPTPD (195 aa)) is the tr-type G domain. The segment at 19 to 26 (GHIDHGKT) is G1. 19–26 (GHIDHGKT) is a binding site for GTP. Thr-26 contributes to the Mg(2+) binding site. The segment at 60–64 (GITIN) is G2. Residues 81 to 84 (DCPG) are G3. Residues 81 to 85 (DCPGH) and 136 to 139 (NKCD) each bind GTP. Residues 136 to 139 (NKCD) are G4. The G5 stretch occupies residues 174–176 (SAL).

It belongs to the TRAFAC class translation factor GTPase superfamily. Classic translation factor GTPase family. EF-Tu/EF-1A subfamily. In terms of assembly, monomer.

Its subcellular location is the cytoplasm. It catalyses the reaction GTP + H2O = GDP + phosphate + H(+). In terms of biological role, GTP hydrolase that promotes the GTP-dependent binding of aminoacyl-tRNA to the A-site of ribosomes during protein biosynthesis. This Mycoplasmoides gallisepticum (strain R(low / passage 15 / clone 2)) (Mycoplasma gallisepticum) protein is Elongation factor Tu.